Here is a 334-residue protein sequence, read N- to C-terminus: Dihydroorotate dehydrogenase (quinone) (334 aa).

Residues 59-63 (AGLDK) and threonine 83 contribute to the FMN site. Lysine 63 is a binding site for substrate. Residue 108 to 112 (NRMGF) coordinates substrate. The FMN site is built by asparagine 136 and asparagine 169. Asparagine 169 is a substrate binding site. Serine 172 functions as the Nucleophile in the catalytic mechanism. Asparagine 174 is a binding site for substrate. FMN contacts are provided by lysine 214 and threonine 242. Substrate is bound at residue 243-244 (NT). FMN-binding positions include glycine 265, glycine 294, and 315–316 (YS).

Belongs to the dihydroorotate dehydrogenase family. Type 2 subfamily. Monomer. FMN is required as a cofactor.

It is found in the cell membrane. The catalysed reaction is (S)-dihydroorotate + a quinone = orotate + a quinol. It participates in pyrimidine metabolism; UMP biosynthesis via de novo pathway; orotate from (S)-dihydroorotate (quinone route): step 1/1. Functionally, catalyzes the conversion of dihydroorotate to orotate with quinone as electron acceptor. This Acinetobacter baumannii (strain SDF) protein is Dihydroorotate dehydrogenase (quinone).